The sequence spans 139 residues: MTKYVILLAVLAFALHCDAKRFTRCGLVQELRRLGFDETLMSNWVCLVENESGRFTDKIGKVNKNGSRDYGLFQINDKYWCSKGTTPGKDCNVTCNQLLTDDISVAATCAKKIYKRHKFDAWYGWKNHCQHGLPDISDC.

A signal peptide spans 1–19 (MTKYVILLAVLAFALHCDA). One can recognise a C-type lysozyme domain in the interval 20-139 (KRFTRCGLVQ…QHGLPDISDC (120 aa)). 4 disulfide bridges follow: Cys25-Cys139, Cys46-Cys129, Cys81-Cys95, and Cys91-Cys109. Catalysis depends on residues Glu51 and Asp69.

It belongs to the glycosyl hydrolase 22 family.

The enzyme catalyses Hydrolysis of (1-&gt;4)-beta-linkages between N-acetylmuramic acid and N-acetyl-D-glucosamine residues in a peptidoglycan and between N-acetyl-D-glucosamine residues in chitodextrins.. Lysozymes have primarily a bacteriolytic function; those in tissues and body fluids are associated with the monocyte-macrophage system and enhance the activity of immunoagents. The chain is Lysozyme from Hyalophora cecropia (Cecropia moth).